Here is a 475-residue protein sequence, read N- to C-terminus: NADH-quinone oxidoreductase subunit N (475 aa).

Transmembrane regions (helical) follow at residues 7–27 (ISIA…VLLG), 40–60 (LLGA…SAVD), 74–94 (FIAI…LVAG), 105–125 (FEYT…LSAN), 127–147 (LMTL…LAAF), 161–181 (YFVL…LVYG), 191–211 (IAAA…LMAL), 242–262 (APKL…FGVY), 266–286 (WMLI…FGGL), 295–315 (LAYS…AGEV), 321–341 (VLTY…IVLA), 365–385 (LAVA…MAGF), 399–419 (ELYW…GYYL), and 448–468 (GATI…TGII).

Belongs to the complex I subunit 2 family. NDH-1 is composed of 14 different subunits. Subunits NuoA, H, J, K, L, M, N constitute the membrane sector of the complex.

It is found in the cell inner membrane. It catalyses the reaction a quinone + NADH + 5 H(+)(in) = a quinol + NAD(+) + 4 H(+)(out). NDH-1 shuttles electrons from NADH, via FMN and iron-sulfur (Fe-S) centers, to quinones in the respiratory chain. The immediate electron acceptor for the enzyme in this species is believed to be ubiquinone. Couples the redox reaction to proton translocation (for every two electrons transferred, four hydrogen ions are translocated across the cytoplasmic membrane), and thus conserves the redox energy in a proton gradient. In Hirschia baltica (strain ATCC 49814 / DSM 5838 / IFAM 1418), this protein is NADH-quinone oxidoreductase subunit N.